We begin with the raw amino-acid sequence, 876 residues long: Vacuolar protein sorting-associated protein 39 homolog (876 aa).

One can recognise a CNH domain in the interval 14–310; the sequence is GVQIESIAAY…KFLVHADKGT (297 aa). The CHCR repeat unit spans residues 578 to 741; that stretch reads ELIEVESLPR…ILIPPTQPLY (164 aa).

This sequence belongs to the VAM6/VPS39 family. In terms of assembly, part of the homotypic fusion and vacuole protein sorting (HOPS) complex, composed of Vps16A, car/Vps33A, dor/Vps18, Vps39, Vps11 and lt/Vps41. Interacts with Rab2 (GTP-bound form); the interaction is probably direct.

It localises to the cytoplasm. Its subcellular location is the lysosome membrane. The protein localises to the late endosome membrane. It is found in the late endosome. The protein resides in the lysosome. In terms of biological role, part of the homotypic fusion and vacuole protein sorting (HOPS) tethering complex involved in endo-lysosomal vesicle trafficking and lysosome biogenesis. The HOPS complex facilitates docking and fusion of lysosomes with late endosomes and several other types of vesicles. The HOPS complex is also involved in autophagy and crinophagy (the elimination of unused secretory granules through their fusion with lysosomes). The HOPS complex mediates autophagocitic flux, probably by binding autophagosome-associated Syx17/syntaxin 17, promoting assembly of the trans-SNARE complex and instigating autophagosome-lysosome fusion. Independent of Syx17/syntaxin 17, HOPS is involved in biosynthetic transport to lysosomes and lysosome-related organelles such as eye-pigment granules. Required for autophagocytosis-dependent remodeling of myofibrils and transverse-tubules (T-tubules) during metamorphosis. The sequence is that of Vacuolar protein sorting-associated protein 39 homolog from Drosophila melanogaster (Fruit fly).